A 978-amino-acid polypeptide reads, in one-letter code: Alanine--tRNA ligase, chloroplastic/mitochondrial (978 aa).

Zn(2+) is bound by residues His-655, His-659, Cys-758, and His-762. Residue Lys-773 forms a Glycyl lysine isopeptide (Lys-Gly) (interchain with G-Cter in ubiquitin) linkage.

This sequence belongs to the class-II aminoacyl-tRNA synthetase family. As to quaternary structure, monomer. Zn(2+) serves as cofactor.

It localises to the plastid. The protein localises to the chloroplast. The protein resides in the mitochondrion. It catalyses the reaction tRNA(Ala) + L-alanine + ATP = L-alanyl-tRNA(Ala) + AMP + diphosphate. Functionally, catalyzes the attachment of alanine to tRNA(Ala) in a two-step reaction: alanine is first activated by ATP to form Ala-AMP and then transferred to the acceptor end of tRNA(Ala). Also edits incorrectly charged tRNA(Ala) via its editing domain. This Arabidopsis thaliana (Mouse-ear cress) protein is Alanine--tRNA ligase, chloroplastic/mitochondrial (EMB86).